The sequence spans 138 residues: Large ribosomal subunit protein uL16 (138 aa).

Over residues M1 to G16 the composition is skewed to basic residues. The disordered stretch occupies residues M1–T25.

The protein belongs to the universal ribosomal protein uL16 family. As to quaternary structure, part of the 50S ribosomal subunit.

Binds 23S rRNA and is also seen to make contacts with the A and possibly P site tRNAs. The sequence is that of Large ribosomal subunit protein uL16 from Pseudarthrobacter chlorophenolicus (strain ATCC 700700 / DSM 12829 / CIP 107037 / JCM 12360 / KCTC 9906 / NCIMB 13794 / A6) (Arthrobacter chlorophenolicus).